A 211-amino-acid polypeptide reads, in one-letter code: MTGDHIKVIYFNGRGRAESIRMTLVAAGVNYEDERISFQDWPKIKPTIPGGRLPAVKITDNHGHVKWMLESLAIARYMAKKHHMMGETDEEYYNVEKLIGQVEDLEHEYHKTLMKPEEEKQKITKEILNGKVPVLLDIICESLKASTGKLAVGDKVTLADLVLIAVIDHVTDLDKEFLTGKYPEIHKHRENLLASSPRLAKYLSDRAATPF.

Residues 4 to 86 form the GST N-terminal domain; the sequence is DHIKVIYFNG…YMAKKHHMMG (83 aa). 8 residues coordinate glutathione: Tyr10, Arg16, Trp41, Lys45, Leu53, Glu70, Ser71, and Asp104. The 124-residue stretch at 88 to 211 folds into the GST C-terminal domain; the sequence is TDEEYYNVEK…YLSDRAATPF (124 aa).

This sequence belongs to the GST superfamily. Mu family. As to quaternary structure, homodimer.

It catalyses the reaction RX + glutathione = an S-substituted glutathione + a halide anion + H(+). Conjugation of reduced glutathione to a wide number of exogenous and endogenous hydrophobic electrophiles. Its function is as follows. GST isoenzymes appear to play a central role in the parasite detoxification system. Other functions are also suspected including a role in increasing the solubility of haematin in the parasite gut. This Schistosoma bovis (Blood fluke) protein is Glutathione S-transferase class-mu 28 kDa isozyme.